The chain runs to 615 residues: RNA polymerase sigma factor RpoD (615 aa).

Residues 177-215 (APTATHVGSELSQEDLDDDEDEDEEDGDDDAADDDNSID) are disordered. Over residues 188–214 (SQEDLDDDEDEDEEDGDDDAADDDNSI) the composition is skewed to acidic residues. The segment at 381-451 (MVEANLRLVI…TRSIADQART (71 aa)) is sigma-70 factor domain-2. Residues 405–408 (DLIQ) carry the Interaction with polymerase core subunit RpoC motif. Residues 460–536 (ETINKLNRIS…DTTLELPLDS (77 aa)) form a sigma-70 factor domain-3 region. Positions 549 to 602 (VLAGLTAREAKVLRMRFGIDMNTDHTLEEVGKQFDVTRERIRQIEAKALRKLRH) are sigma-70 factor domain-4. The segment at residues 575–594 (LEEVGKQFDVTRERIRQIEA) is a DNA-binding region (H-T-H motif).

This sequence belongs to the sigma-70 factor family. RpoD/SigA subfamily. As to quaternary structure, interacts transiently with the RNA polymerase catalytic core.

The protein localises to the cytoplasm. Sigma factors are initiation factors that promote the attachment of RNA polymerase to specific initiation sites and are then released. This sigma factor is the primary sigma factor during exponential growth. This is RNA polymerase sigma factor RpoD from Salmonella typhi.